The chain runs to 349 residues: Cytoplasmic tRNA 2-thiolation protein 2 (349 aa).

It belongs to the CTU2/NCS2 family.

The protein resides in the cytoplasm. Its pathway is tRNA modification; 5-methoxycarbonylmethyl-2-thiouridine-tRNA biosynthesis. Functionally, plays a central role in 2-thiolation of mcm(5)S(2)U at tRNA wobble positions of tRNA(Lys), tRNA(Glu) and tRNA(Gln). May act by forming a heterodimer with tut-1/ctu-1 that ligates sulfur from thiocarboxylated urm-1 onto the uridine of tRNAs at wobble position. In Caenorhabditis elegans, this protein is Cytoplasmic tRNA 2-thiolation protein 2.